The chain runs to 241 residues: Putative hydrolase 080R (241 aa).

In terms of domain architecture, Nudix hydrolase spans 50–241 (FPDLSFNLMV…VIKVQKIMIL (192 aa)). A Nudix box motif is present at residues 136 to 157 (GHCNGNEPVLSTLLREFREETT). Positions 151, 155, and 204 each coordinate Mg(2+).

This sequence belongs to the Nudix hydrolase family.

The chain is Putative hydrolase 080R from Aedes vexans (Inland floodwater mosquito).